A 177-amino-acid polypeptide reads, in one-letter code: Ribosome maturation factor RimM (177 aa).

Residues 104-177 (GVDGIWADLI…IIKVKLMEGM (74 aa)) enclose the PRC barrel domain.

It belongs to the RimM family. As to quaternary structure, binds ribosomal protein uS19.

It localises to the cytoplasm. In terms of biological role, an accessory protein needed during the final step in the assembly of 30S ribosomal subunit, possibly for assembly of the head region. Essential for efficient processing of 16S rRNA. May be needed both before and after RbfA during the maturation of 16S rRNA. It has affinity for free ribosomal 30S subunits but not for 70S ribosomes. This chain is Ribosome maturation factor RimM, found in Magnetococcus marinus (strain ATCC BAA-1437 / JCM 17883 / MC-1).